Reading from the N-terminus, the 993-residue chain is MATSSFNINELVASHGDKGLLATALVDKAAHEQLEEQLQHQRRGRKVYVRNVLSVKDSEVIRNRYGGKYDLHLTQQEFAPHGLAGALRLCETLDCLDSFPSSGLRQDLVLDFGGSWVTHYLRGHNVHCCSPCLGIRDKMRHTERLMNMRKIILNDPQQFDGRQPDFCTHPAADCKVQAHFAISIHGGYDMGFRGLCEAMNAHGTTILKGTMMFDGAMMFDDQGIIPELNCQWRKIRNAFSETEDVTPLVGKLNSTVFSRVRKFKTLVAFDFINESTMSYVHDWENIKSFLTDQTYSYKGMTYGIERCVINAGIMTYKIIGVPGMCPPELIRHCIWFPSIKDYVGLKIPASQDLVEWKTVRILTSTLRETEEIAMRCYNDKKAWMEQFKVILGVLSAKSSTIVINGMSMQSGERIDINDYHYIGFAILLHTKMKYEQLGKMYDMWNASSISKWFAALTRPVRVFFSSAVHALFPTLRPREEKEFLIKLSTFVTFNEECSFDGGEEWDVISSAAYVATQAVTDGKVLAAQKAEKLAEKLAQPVDEVSDSPEVPSSTPDDTADVCGKEQEVSELDSLSAQTRSPITRVAERATAMLEYAAYEKQLHDTTVSNLKRIWNMAGGDDKRNSLEGNLKFVFDTYFTVDPMVNIHFSTGRWMRPVPEGIVYSVGYNERGLGPKSDGELFIVNSECVICNSESLSAVTRSLQAPTGTISQVDGVAGCGKTTAIKSIFEPSTDMIVTANKKSAQDVRMALFKSSDSKEACAFVRTADSVLLNECPTVSRVLVDEVVLLHFGQLCAVMSKLKAVRAICFGDSEQIAFSSRDASFDMRFSKIIPDETSDADTTFRSPQDVVPLVRLMATKALPKGTHSKYTKWVSQSKVKRSVTSRSIASVTLVDLDSSRFYITMTQADKASLISRAKEMNLPKTFWNERIKTVHESQGISEDHVTLVRLKSTKCDLFKQFSYCLVALTRHKVTFRYEYCGVLNGDLIAECIARA.

Positions 50–409 (RNVLSVKDSE…TIVINGMSMQ (360 aa)) are methyltransferase. Residues 72 to 290 (HLTQQEFAPH…HDWENIKSFL (219 aa)) enclose the Alphavirus-like MT domain. The tract at residues 537–565 (LAQPVDEVSDSPEVPSSTPDDTADVCGKE) is disordered. Residues 687 to 838 (CVICNSESLS…KIIPDETSDA (152 aa)) enclose the (+)RNA virus helicase ATP-binding domain. The segment at 712–975 (VDGVAGCGKT…LTRHKVTFRY (264 aa)) is ATP-dependent helicase. 714–721 (GVAGCGKT) contacts ATP. Positions 839 to 993 (DTTFRSPQDV…DLIAECIARA (155 aa)) constitute a (+)RNA virus helicase C-terminal domain.

The protein belongs to the bromoviridae replication protein 1a family. As to quaternary structure, interacts with RNA-directed RNA polymerase 2a.

Its subcellular location is the host endoplasmic reticulum membrane. Involved in the virus replication. Contains a helicase domain and a methyltransferase domain. The methyltransferase domain is probably involved in viral RNA capping. Involved in the formation of ER membrane spherular invaginations in which RNA replication complexes form. This Cucumber mosaic virus (strain O) (CMV) protein is Replication protein 1a.